A 151-amino-acid polypeptide reads, in one-letter code: Ribosome maturation factor RimP (151 aa).

It belongs to the RimP family.

It is found in the cytoplasm. Functionally, required for maturation of 30S ribosomal subunits. This is Ribosome maturation factor RimP from Nitrosococcus oceani (strain ATCC 19707 / BCRC 17464 / JCM 30415 / NCIMB 11848 / C-107).